A 425-amino-acid polypeptide reads, in one-letter code: UDP-N-acetylglucosamine 1-carboxyvinyltransferase (425 aa).

Position 22 to 23 (22 to 23) interacts with phosphoenolpyruvate; the sequence is KN. Arg91 lines the UDP-N-acetyl-alpha-D-glucosamine pocket. Cys115 (proton donor) is an active-site residue. Cys115 carries the 2-(S-cysteinyl)pyruvic acid O-phosphothioketal modification. UDP-N-acetyl-alpha-D-glucosamine is bound by residues 120–124, Asp305, and Val327; that span reads RPIDL.

The protein belongs to the EPSP synthase family. MurA subfamily.

The protein localises to the cytoplasm. The enzyme catalyses phosphoenolpyruvate + UDP-N-acetyl-alpha-D-glucosamine = UDP-N-acetyl-3-O-(1-carboxyvinyl)-alpha-D-glucosamine + phosphate. It participates in cell wall biogenesis; peptidoglycan biosynthesis. Cell wall formation. Adds enolpyruvyl to UDP-N-acetylglucosamine. The chain is UDP-N-acetylglucosamine 1-carboxyvinyltransferase from Coprothermobacter proteolyticus (strain ATCC 35245 / DSM 5265 / OCM 4 / BT).